Reading from the N-terminus, the 244-residue chain is 6-carboxyhexanoate--CoA ligase (244 aa).

Belongs to the BioW family. In terms of assembly, homodimer. It depends on Mg(2+) as a cofactor.

The enzyme catalyses heptanedioate + ATP + CoA = 6-carboxyhexanoyl-CoA + AMP + diphosphate. Its pathway is metabolic intermediate metabolism; pimeloyl-CoA biosynthesis; pimeloyl-CoA from pimelate: step 1/1. Catalyzes the transformation of pimelate into pimeloyl-CoA with concomitant hydrolysis of ATP to AMP. This is 6-carboxyhexanoate--CoA ligase from Methanococcus maripaludis (strain C7 / ATCC BAA-1331).